The following is a 545-amino-acid chain: Chaperonin GroEL (545 aa).

ATP-binding positions include 29–32, Lys50, 86–90, Gly413, and Asp495; these read TLGP and DGTTT.

It belongs to the chaperonin (HSP60) family. As to quaternary structure, forms a cylinder of 14 subunits composed of two heptameric rings stacked back-to-back. Interacts with the co-chaperonin GroES.

The protein localises to the cytoplasm. The catalysed reaction is ATP + H2O + a folded polypeptide = ADP + phosphate + an unfolded polypeptide.. In terms of biological role, together with its co-chaperonin GroES, plays an essential role in assisting protein folding. The GroEL-GroES system forms a nano-cage that allows encapsulation of the non-native substrate proteins and provides a physical environment optimized to promote and accelerate protein folding. The sequence is that of Chaperonin GroEL from Borreliella burgdorferi (strain ATCC 35210 / DSM 4680 / CIP 102532 / B31) (Borrelia burgdorferi).